Reading from the N-terminus, the 131-residue chain is MYILTISIPGYSGYSGDDMGDDEYLCSVEVAVNEIGGKWKSLVLCTLKDGKLRFSEINRRIPKITQRMLTRTLRELESSGLINREVYPEVPPRVEYCLTEKGKSVIPILDALCEWGKMYGSHQENSGEKAP.

Residues cysteine 26–glutamate 124 enclose the HTH hxlR-type domain.

This is an uncharacterized protein from Methanothermobacter thermautotrophicus (strain ATCC 29096 / DSM 1053 / JCM 10044 / NBRC 100330 / Delta H) (Methanobacterium thermoautotrophicum).